Consider the following 501-residue polypeptide: NAD(P)H-quinone oxidoreductase subunit 2, chloroplastic (501 aa).

14 helical membrane-spanning segments follow: residues 15–35 (ILPE…DLTF), 40–60 (TIWL…ILLF), 82–102 (IFQS…IEYI), 107–127 (MAIP…MFLC), 132–152 (LVTI…LCGY), 167–187 (LLIG…LYGL), 212–232 (TFIA…LVPF), 244–264 (PTPV…ALAT), 278–298 (WKIF…LVAI), 307–327 (LAYS…TGDL), 333–353 (MTIY…CIIL), 378–398 (FSLT…GFFG), 410–430 (GFYL…YYYL), and 466–486 (FVMI…NPIF).

It belongs to the complex I subunit 2 family. In terms of assembly, NDH is composed of at least 16 different subunits, 5 of which are encoded in the nucleus.

It is found in the plastid. Its subcellular location is the chloroplast thylakoid membrane. It carries out the reaction a plastoquinone + NADH + (n+1) H(+)(in) = a plastoquinol + NAD(+) + n H(+)(out). It catalyses the reaction a plastoquinone + NADPH + (n+1) H(+)(in) = a plastoquinol + NADP(+) + n H(+)(out). NDH shuttles electrons from NAD(P)H:plastoquinone, via FMN and iron-sulfur (Fe-S) centers, to quinones in the photosynthetic chain and possibly in a chloroplast respiratory chain. The immediate electron acceptor for the enzyme in this species is believed to be plastoquinone. Couples the redox reaction to proton translocation, and thus conserves the redox energy in a proton gradient. The sequence is that of NAD(P)H-quinone oxidoreductase subunit 2, chloroplastic from Marchantia polymorpha (Common liverwort).